A 366-amino-acid polypeptide reads, in one-letter code: Palmitoyltransferase ZDHHC2 (366 aa).

Residues 1–15 are Cytoplasmic-facing; the sequence is MAPSGSGGVRRRCRR. A helical transmembrane segment spans residues 16–36; sequence VLYWIPVVFISLLLGWSYYAY. Residues 37–47 lie on the Lumenal side of the membrane; it reads AIQLCIVSMEN. A helical membrane pass occupies residues 48–68; that stretch reads IGEQVVCLMAYHLLFAMFVWS. The Cytoplasmic segment spans residues 69-169; sequence YWKTIFTLPM…NNCVGFSNYK (101 aa). One can recognise a DHHC domain in the interval 126–176; the sequence is RYCDRCQLIKPDRCHHCSVCDKCILKMDHHCPWVNNCVGFSNYKFFLLFLA. The active-site S-palmitoyl cysteine intermediate is Cys156. The helical transmembrane segment at 170–190 threads the bilayer; the sequence is FFLLFLAYSLLYCLFIAATDL. The Lumenal segment spans residues 191–207; it reads QYFIRFWTNGLPDTQAK. Residues 208–228 form a helical membrane-spanning segment; the sequence is FHIMFLFFAAAMFSVSLSSLF. Topologically, residues 229–366 are cytoplasmic; it reads GYHCWLVSKN…NPALTMENET (138 aa). Polar residues predominate over residues 297 to 316; that stretch reads VNQDPEQPSTPAGLNSTVKN. The interval 297–366 is disordered; that stretch reads VNQDPEQPST…NPALTMENET (70 aa). The tract at residues 298 to 366 is mediates localization to plasma membrane and recycling endosomes; the sequence is NQDPEQPSTP…NPALTMENET (69 aa). Basic and acidic residues predominate over residues 326–336; it reads PLRESQSHLLK. Positions 334–335 match the Non-canonical dileucine endocytic signal motif; sequence LL. Residues 337–347 are compositionally biased toward polar residues; that stretch reads DSQTWTESSAN. Residues 357–360 carry the NPxY-like endocytic signal motif; it reads NPAL.

Belongs to the DHHC palmitoyltransferase family. Monomer. Homodimer. The monomeric form has a higher catalytic activity. Autopalmitoylated. In terms of tissue distribution, expressed in all brain regions.

It is found in the postsynaptic density. It localises to the postsynaptic recycling endosome membrane. Its subcellular location is the cell membrane. The protein localises to the endoplasmic reticulum membrane. The protein resides in the golgi apparatus membrane. The catalysed reaction is L-cysteinyl-[protein] + hexadecanoyl-CoA = S-hexadecanoyl-L-cysteinyl-[protein] + CoA. It carries out the reaction L-cysteinyl-[protein] + tetradecanoyl-CoA = S-tetradecanoyl-L-cysteinyl-[protein] + CoA. It catalyses the reaction L-cysteinyl-[protein] + octadecanoyl-CoA = S-octadecanoyl-L-cysteinyl-[protein] + CoA. In terms of biological role, palmitoyltransferase that catalyzes the addition of palmitate onto various protein substrates and is involved in a variety of cellular processes. Has no stringent fatty acid selectivity and in addition to palmitate can also transfer onto target proteins myristate from tetradecanoyl-CoA and stearate from octadecanoyl-CoA. In the nervous system, plays a role in long term synaptic potentiation by palmitoylating AKAP5 through which it regulates protein trafficking from the dendritic recycling endosomes to the plasma membrane and controls both structural and functional plasticity at excitatory synapses. In dendrites, mediates the palmitoylation of DLG4 when synaptic activity decreases and induces synaptic clustering of DLG4 and associated AMPA-type glutamate receptors. Also mediates the de novo and turnover palmitoylation of RGS7BP, a shuttle for Gi/o-specific GTPase-activating proteins/GAPs, promoting its localization to the plasma membrane in response to the activation of G protein-coupled receptors. Through the localization of these GTPase-activating proteins/GAPs, it also probably plays a role in G protein-coupled receptors signaling in neurons. Also probably plays a role in cell adhesion by palmitoylating CD9 and CD151 to regulate their expression and function. Palmitoylates the endoplasmic reticulum protein CKAP4 and regulates its localization to the plasma membrane. Could also palmitoylate LCK and regulate its localization to the plasma membrane. This is Palmitoyltransferase ZDHHC2 from Mus musculus (Mouse).